We begin with the raw amino-acid sequence, 487 residues long: Putative B3 domain-containing protein At1g78640 (487 aa).

2 DNA-binding regions (TF-B3) span residues 171-269 (RLLL…QQGT) and 379-474 (RLTL…LFRV).

Its subcellular location is the nucleus. This is Putative B3 domain-containing protein At1g78640 from Arabidopsis thaliana (Mouse-ear cress).